We begin with the raw amino-acid sequence, 880 residues long: Leucine--tRNA ligase (880 aa).

The short motif at 49–59 is the 'HIGH' region element; sequence PYPSGRIHMGH. Residues 638–642 carry the 'KMSKS' region motif; sequence KMSKS. ATP is bound at residue lysine 641.

Belongs to the class-I aminoacyl-tRNA synthetase family.

Its subcellular location is the cytoplasm. It carries out the reaction tRNA(Leu) + L-leucine + ATP = L-leucyl-tRNA(Leu) + AMP + diphosphate. The sequence is that of Leucine--tRNA ligase from Bartonella henselae (strain ATCC 49882 / DSM 28221 / CCUG 30454 / Houston 1) (Rochalimaea henselae).